Reading from the N-terminus, the 169-residue chain is Putative phosphoesterase BLi01284/BL02661 (169 aa).

His-34 (proton donor) is an active-site residue. 2 consecutive short sequence motifs (HXTX) follow at residues 34-37 (HLTL) and 115-118 (HVTV). His-115 serves as the catalytic Proton acceptor.

This sequence belongs to the 2H phosphoesterase superfamily. YjcG family.

In Bacillus licheniformis (strain ATCC 14580 / DSM 13 / JCM 2505 / CCUG 7422 / NBRC 12200 / NCIMB 9375 / NCTC 10341 / NRRL NRS-1264 / Gibson 46), this protein is Putative phosphoesterase BLi01284/BL02661.